Consider the following 174-residue polypeptide: Cytochrome c-type biogenesis protein CcmE (174 aa).

Residues 1-7 (MTRKSRR) are Cytoplasmic-facing. The chain crosses the membrane as a helical; Signal-anchor for type II membrane protein span at residues 8–28 (LILIGAGLGVLALAAGLILTA). The Periplasmic segment spans residues 29-174 (LNDTIVFFRT…PAVSPARSTP (146 aa)). Positions 121 and 125 each coordinate heme. Over residues 130 to 144 (VADALKKSGHWKEGE) the composition is skewed to basic and acidic residues. Residues 130–174 (VADALKKSGHWKEGEEGGPVPPAAKTPGPQSSAAPPAVSPARSTP) are disordered. Residues 156–174 (PGPQSSAAPPAVSPARSTP) show a composition bias toward low complexity.

The protein belongs to the CcmE/CycJ family.

Its subcellular location is the cell inner membrane. In terms of biological role, heme chaperone required for the biogenesis of c-type cytochromes. Transiently binds heme delivered by CcmC and transfers the heme to apo-cytochromes in a process facilitated by CcmF and CcmH. This chain is Cytochrome c-type biogenesis protein CcmE, found in Azorhizobium caulinodans (strain ATCC 43989 / DSM 5975 / JCM 20966 / LMG 6465 / NBRC 14845 / NCIMB 13405 / ORS 571).